Reading from the N-terminus, the 710-residue chain is Choline transporter-like protein 4 (710 aa).

The Cytoplasmic portion of the chain corresponds to 1–34 (MGGKQRDEDDEAYGKPVKYDPSFRGPIKNRSCTD). Residues 35–55 (VICCVLFLLFILGYIVVGIVA) form a helical membrane-spanning segment. The Extracellular segment spans residues 56–229 (WLYGDPRQVL…KIFEDFAQSW (174 aa)). Asn-69, Asn-155, and Asn-197 each carry an N-linked (GlcNAc...) asparagine glycan. A helical transmembrane segment spans residues 230–250 (YWILVALGVALVLSLLFILLL). The Cytoplasmic portion of the chain corresponds to 251 to 252 (RL). Residues 253 to 273 (VAGPLVLVLILGVLGVLAYGI) traverse the membrane as a helical segment. At 274-309 (YYCWEEYRVLRDKGASISQLGFTTNLSAYQSVQETW) the chain is on the extracellular side. Asn-298 is a glycosylation site (N-linked (GlcNAc...) asparagine). A helical transmembrane segment spans residues 310 to 330 (LAALIVLAVLEAILLLMLIFL). The Cytoplasmic portion of the chain corresponds to 331–358 (RQRIRIAIALLKEASKAVGQMMSTMFYP). The chain crosses the membrane as a helical span at residues 359-379 (LVTFVLLLICIAYWAMTALYL). Residues 380–455 (ATSGQPQYVL…GVLGLFWTLN (76 aa)) are Extracellular-facing. 3 N-linked (GlcNAc...) asparagine glycosylation sites follow: Asn-393, Asn-405, and Asn-416. The chain crosses the membrane as a helical span at residues 456 to 476 (WVLALGQCVLAGAFASFYWAF). Residues 477–501 (HKPQDIPTFPLISAFIRTLRYHTGS) lie on the Cytoplasmic side of the membrane. The chain crosses the membrane as a helical span at residues 502 to 522 (LAFGALILTLVQIARVILEYI). Residues 523-560 (DHKLRGVQNPVARCIMCCFKCCLWCLEKFIKFLNRNAY) are Extracellular-facing. A helical membrane pass occupies residues 561-581 (IMIAIYGKNFCVSAKNAFMLL). At 582–597 (MRNIVRVVVLDKVTDL) the chain is on the cytoplasmic side. Residues 598-618 (LLFFGKLLVVGGVGVLSFFFF) traverse the membrane as a helical segment. The Extracellular segment spans residues 619 to 638 (SGRIPGLGKDFKSPHLNYYW). A helical transmembrane segment spans residues 639–659 (LPIMTSILGAYVIASGFFSVF). At 660–710 (GMCVDTLFLCFLEDLERNNGSLDRPYYMSKSLLKILGKKNEAPPDNKKRKK) the chain is on the cytoplasmic side.

Belongs to the CTL (choline transporter-like) family. In terms of processing, N-glycosylated; N-glycosylation of Asn-69, Asn-155 and Asn-393 is required for a proper thiamine pyrophosphate uptake. As to expression, highly expressed in colon, also detected in prostate, trachea and lung. Isoform 3 is also expressed in colon but a lower levels. In terms of tissue distribution, expressed in colon at low levels.

The protein localises to the membrane. Its subcellular location is the apical cell membrane. It carries out the reaction choline(out) + n H(+)(in) = choline(in) + n H(+)(out). The catalysed reaction is thiamine diphosphate(out) = thiamine diphosphate(in). Functionally, choline transporter that plays a role in the choline-acetylcholine system and is required to the efferent innervation of hair cells in the olivocochlear bundle for the maintenance of physiological function of outer hair cells and the protection of hair cells from acoustic injury. Also described as a thiamine pyrophosphate transporter in colon, may mediate the absorption of microbiota-generated thiamine pyrophosphate and contribute to host thiamine (vitamin B1) homeostasis. In terms of biological role, also has thiamine pyrophosphate transporter activity. This Homo sapiens (Human) protein is Choline transporter-like protein 4.